The primary structure comprises 730 residues: Sodium-dependent neutral amino acid transporter B(0)AT2 (730 aa).

A disordered region spans residues 1–24 (MPKNSKVVKRELDDDVTESVKDLL). Residues 1-70 (MPKNSKVVKR…RPAWSSKLQY (70 aa)) are Extracellular-facing. Ser-25 and Ser-55 each carry phosphoserine. 3 consecutive transmembrane segments (helical) span residues 71 to 91 (ILAQ…PYLC), 97 to 117 (GAYL…LFFL), and 149 to 169 (VVCY…LFYF). Residues 170–223 (SQSFQQPLPWDQCPLVKNASHTFVEPECEQSSATTYYWYREALNISSSISESGG) lie on the Cytoplasmic side of the membrane. A run of 2 helical transmembrane segments spans residues 224–244 (LNWK…LAMI) and 253–273 (IIYF…IRAL). N-linked (GlcNAc...) asparagine glycosylation is present at Asn-276. 2 helical membrane passes run 302–322 (AATQ…AFSS) and 335–355 (VLVS…VFAV). Residues 356-458 (LGFKANVINE…AMTHFPASPF (103 aa)) are Cytoplasmic-facing. Transmembrane regions (helical) follow at residues 459-479 (WSVM…FGTI), 494-514 (KEIL…IFVQ), 530-550 (TLPL…VYGI), 575-595 (YVSP…MGLS), and 619-639 (LVVC…VFIV). Residues 640–730 (RRFNLIDDSS…IMPDMPESDL (91 aa)) lie on the Extracellular side of the membrane. Ser-687, Ser-699, and Ser-701 each carry phosphoserine.

Belongs to the sodium:neurotransmitter symporter (SNF) (TC 2.A.22) family. SLC6A15 subfamily.

Its subcellular location is the membrane. It carries out the reaction L-leucine(in) + Na(+)(in) = L-leucine(out) + Na(+)(out). It catalyses the reaction L-isoleucine(in) + Na(+)(in) = L-isoleucine(out) + Na(+)(out). The catalysed reaction is L-methionine(in) + Na(+)(in) = L-methionine(out) + Na(+)(out). The enzyme catalyses L-proline(in) + Na(+)(in) = L-proline(out) + Na(+)(out). It carries out the reaction L-alanine(in) + Na(+)(in) = L-alanine(out) + Na(+)(out). It catalyses the reaction L-asparagine(in) + Na(+)(in) = L-asparagine(out) + Na(+)(out). The catalysed reaction is L-valine(in) + Na(+)(in) = L-valine(out) + Na(+)(out). The enzyme catalyses L-cysteine(in) + Na(+)(in) = L-cysteine(out) + Na(+)(out). It carries out the reaction L-glutamine(in) + Na(+)(in) = L-glutamine(out) + Na(+)(out). It catalyses the reaction L-serine(in) + Na(+)(in) = L-serine(out) + Na(+)(out). The catalysed reaction is L-threonine(in) + Na(+)(in) = L-threonine(out) + Na(+)(out). The enzyme catalyses L-pipecolate(in) + Na(+)(in) = L-pipecolate(out) + Na(+)(out). It carries out the reaction L-phenylalanine(in) + Na(+)(in) = L-phenylalanine(out) + Na(+)(out). Its function is as follows. Functions as a sodium-dependent neutral amino acid transporter. Exhibits preference for the branched-chain amino acids, particularly leucine, valine and isoleucine and methionine. Can also transport low-affinity substrates such as alanine, phenylalanine, glutamine and pipecolic acid. Mediates the saturable, pH-sensitive and electrogenic cotransport of proline and sodium ions with a stoichiometry of 1:1. May have a role as transporter for neurotransmitter precursors into neurons. In contrast to other members of the neurotransmitter transporter family, does not appear to be chloride-dependent. The sequence is that of Sodium-dependent neutral amino acid transporter B(0)AT2 (SLC6A15) from Pongo abelii (Sumatran orangutan).